Here is a 416-residue protein sequence, read N- to C-terminus: MSATPVTLKAVQSEVSAQTAKSSEAEVKRCEDLILSYSRQLAKEKDITGIRTLVESIRSFYDLVGKARASKLIRDIVEHALTIDQGVGPALDHGKKEKIDLLTNCIGWATSNKREFLRRSLQARLIRLYNDIRDFTNAQKLAQDLSKELKKLEDRELLIEVSVEESKSSFNLNNLAKAKTALLTAKTNTNSAFASPQLQASVDMQSGVLYSAEERDYKTSFSYFYEAFEGFASIGDKINATSALKYMILCKIMLNETEQLAGLLAAKEIVAYQKSPRIIAIRSMADAFRKRSLKDFVKALAEHKIELVEDKVVAVHSQNLERNMLEKEISRVIEPYSEIELSYIARVIGMTVPPVERAIARMILDKKLMGSIDQHGDTVVVYPKADAANQFTRSLKTIRELTKTVDVSYSRTKHFK.

Positions Tyr217–Asp386 constitute a PCI domain.

It belongs to the proteasome subunit S9 family. In terms of assembly, component of the lid subcomplex of the 19S proteasome regulatory particle complex (also named PA700 complex). The 26S proteasome consists of a 20S proteasome core and two 19S regulatory subunits.

Its function is as follows. Component of the lid subcomplex of the 26S proteasome, a multiprotein complex involved in the ATP-dependent degradation of ubiquitinated proteins. In the complex, rpn-6.2 is required for proteasome assembly. In Caenorhabditis elegans, this protein is Probable 26S proteasome regulatory subunit rpn-6.2 (rpn-6.2).